Reading from the N-terminus, the 419-residue chain is MRISGIDAAKALQALAGRLPTPRRASLARLTDTDGGALDHALILWFPGPATATGEDLAELHLHGGRAVVAAVEAALAAMPGLRRAEAGEFTRRAFANGRIDLAEAEGLADLLAAETESQRVQALDHASGHVSRAVAGWQARLLALMAAAEAELNFADEDDVEVGEGVAQRVSEGMAALAGELGEWLARPAAEVIAEGLSVVIAGPPNAGKSTLINALAQRELAIVSPVAGTTRDVIETPLALDGIAMRFSDTAGLRGESADAIEMIGIDRAKAAVEGADILLWLGAPKEAPEHPRTILIAAQADRWRGDAAAEAEAAHCDLILSAATGEGMDRLHTMIVEMARTLLPREGEATLRQRQRDALAEAKGWLEVETGSREAGDLILLAERLRLAGATLDRITGRGGVEDMLDTLFGRFCIGK.

(6S)-5-formyl-5,6,7,8-tetrahydrofolate-binding residues include Arg-2, Glu-59, and Arg-99. The TrmE-type G domain maps to 197–343 (GLSVVIAGPP…LHTMIVEMAR (147 aa)). Position 207 (Asn-207) interacts with K(+). Residues 207–212 (NAGKST), 226–232 (SPVAGTT), and 251–254 (DTAG) each bind GTP. Mg(2+) is bound at residue Ser-211. The K(+) site is built by Ser-226, Val-228, and Thr-231. Thr-232 provides a ligand contact to Mg(2+). Position 419 (Lys-419) interacts with (6S)-5-formyl-5,6,7,8-tetrahydrofolate.

This sequence belongs to the TRAFAC class TrmE-Era-EngA-EngB-Septin-like GTPase superfamily. TrmE GTPase family. In terms of assembly, homodimer. Heterotetramer of two MnmE and two MnmG subunits. Requires K(+) as cofactor.

It localises to the cytoplasm. Functionally, exhibits a very high intrinsic GTPase hydrolysis rate. Involved in the addition of a carboxymethylaminomethyl (cmnm) group at the wobble position (U34) of certain tRNAs, forming tRNA-cmnm(5)s(2)U34. The chain is tRNA modification GTPase MnmE from Sphingopyxis alaskensis (strain DSM 13593 / LMG 18877 / RB2256) (Sphingomonas alaskensis).